We begin with the raw amino-acid sequence, 415 residues long: Histidine--tRNA ligase (415 aa).

Belongs to the class-II aminoacyl-tRNA synthetase family. As to quaternary structure, homodimer.

The protein localises to the cytoplasm. It catalyses the reaction tRNA(His) + L-histidine + ATP = L-histidyl-tRNA(His) + AMP + diphosphate + H(+). The polypeptide is Histidine--tRNA ligase (Phytoplasma australiense).